The chain runs to 193 residues: uncharacterized protein (193 aa).

The tract at residues 158-193 is disordered; the sequence is YNPIYDDHNPLPPEKKKSILSRTRSTKLSSGEITPV. A compositionally biased stretch (basic and acidic residues) spans 162-174; the sequence is YDDHNPLPPEKKK. The segment covering 177–193 has biased composition (polar residues); sequence LSRTRSTKLSSGEITPV.

This is an uncharacterized protein from Micromonas pusilla (Picoplanktonic green alga).